Reading from the N-terminus, the 502-residue chain is UPF0371 protein CLL_A2797 (502 aa).

It belongs to the UPF0371 family.

The chain is UPF0371 protein CLL_A2797 from Clostridium botulinum (strain Eklund 17B / Type B).